Consider the following 292-residue polypeptide: Peroxidase 2 (292 aa).

4 cysteine pairs are disulfide-bonded: C7–C86, C40–C45, C92–C288, and C171–C199. Residue H38 is the Proton acceptor of the active site. Residues D39, V42, G44, D46, and S48 each contribute to the Ca(2+) site. N-linked (GlcNAc...) asparagine glycosylation occurs at N68. P134 lines the substrate pocket. N139 carries N-linked (GlcNAc...) asparagine glycosylation. H164 contacts heme b. T165 lines the Ca(2+) pocket. N179 is a glycosylation site (N-linked (GlcNAc...) asparagine). Residues D210, T213, and D218 each coordinate Ca(2+).

It belongs to the peroxidase family. Classical plant (class III) peroxidase subfamily. The cofactor is Ca(2+). Heme b is required as a cofactor.

The enzyme catalyses 2 a phenolic donor + H2O2 = 2 a phenolic radical donor + 2 H2O. Removal of H(2)O(2), oxidation of toxic reductants, biosynthesis and degradation of lignin, suberization, auxin catabolism, response to environmental stresses such as wounding, pathogen attack and oxidative stress. These functions might be dependent on each isozyme/isoform in each plant tissue. The sequence is that of Peroxidase 2 from Cucumis sativus (Cucumber).